The chain runs to 436 residues: Trigger factor (436 aa).

The PPIase FKBP-type domain occupies 163–248; it reads GDRVVLDFAG…VKEVAEGVLP (86 aa).

This sequence belongs to the FKBP-type PPIase family. Tig subfamily.

The protein resides in the cytoplasm. It carries out the reaction [protein]-peptidylproline (omega=180) = [protein]-peptidylproline (omega=0). Involved in protein export. Acts as a chaperone by maintaining the newly synthesized protein in an open conformation. Functions as a peptidyl-prolyl cis-trans isomerase. In Bordetella pertussis (strain Tohama I / ATCC BAA-589 / NCTC 13251), this protein is Trigger factor.